The chain runs to 90 residues: Small ribosomal subunit protein uS15c (90 aa).

The protein belongs to the universal ribosomal protein uS15 family. As to quaternary structure, part of the 30S ribosomal subunit.

The protein resides in the plastid. It is found in the chloroplast. This Pelargonium hortorum (Common geranium) protein is Small ribosomal subunit protein uS15c (rps15-A).